The sequence spans 1320 residues: Protein brunelleschi (1320 aa).

The interval 313 to 411 (HRNSSLQEAG…IPGHQRNGDL (99 aa)) is disordered. A compositionally biased stretch (polar residues) spans 314-327 (RNSSLQEAGTSPLK). Serine 317 carries the post-translational modification Phosphoserine. Position 329 is a phosphothreonine (threonine 329). The span at 329–340 (TPEKWRASDATK) shows a compositional bias: basic and acidic residues. Polar residues predominate over residues 345 to 361 (SDATANNVDSNQPQQRV). Positions 362–400 (TSNSSSCSSVSSLVTTATNSSASDTPTTSSSSTSTISAA) are enriched in low complexity. Serine 672 is subject to Phosphoserine. The disordered stretch occupies residues 923-954 (VSTSGHASLPSRVGSPHHRRNEPQNSSFRSTI). Over residues 945 to 954 (PQNSSFRSTI) the composition is skewed to polar residues.

It belongs to the NIBP family. As to quaternary structure, may be part of the multisubunit TRAPP (transport protein particle) complex.

Its subcellular location is the cytoplasm. The protein resides in the golgi apparatus. Cooperates with Rab11 and fwd/PI4K to mediate the flow of membrane through the Golgi, which is required to support cleavage furrow ingression, therefore promoting cytokinesis in male meiotic cells. This chain is Protein brunelleschi, found in Drosophila melanogaster (Fruit fly).